The sequence spans 544 residues: Chaperonin GroEL (544 aa).

ATP-binding positions include 30-33 (TLGP), Lys-51, 87-91 (DGTTT), Gly-415, and Asp-495.

It belongs to the chaperonin (HSP60) family. In terms of assembly, forms a cylinder of 14 subunits composed of two heptameric rings stacked back-to-back. Interacts with the co-chaperonin GroES.

The protein localises to the cytoplasm. The enzyme catalyses ATP + H2O + a folded polypeptide = ADP + phosphate + an unfolded polypeptide.. In terms of biological role, together with its co-chaperonin GroES, plays an essential role in assisting protein folding. The GroEL-GroES system forms a nano-cage that allows encapsulation of the non-native substrate proteins and provides a physical environment optimized to promote and accelerate protein folding. The chain is Chaperonin GroEL from Bartonella bacilliformis.